We begin with the raw amino-acid sequence, 154 residues long: Putative protein heh-1 (154 aa).

An N-terminal signal peptide occupies residues 1–15 (MKTVIFLALLGLAAA). Cystine bridges form between cysteine 39/cysteine 50 and cysteine 97/cysteine 103.

The protein belongs to the NPC2 family.

The protein localises to the secreted. This is Putative protein heh-1 (heh-1) from Caenorhabditis elegans.